The following is a 119-amino-acid chain: Histone H1B, sperm (119 aa).

The region spanning 8–77 (THPPVATAVV…QNKGSFRVNK (70 aa)) is the H15 domain. Residues 76-119 (NKTALPKKKKAAKKPKAKKVKKPKSAAKKKTNRARAPKTKKNRN) are disordered. A compositionally biased stretch (basic residues) spans 80–119 (LPKKKKAAKKPKAKKVKKPKSAAKKKTNRARAPKTKKNRN).

The protein belongs to the histone H1/H5 family.

It is found in the nucleus. It localises to the chromosome. Functionally, histones H1 are necessary for the condensation of nucleosome chains into higher-order structures. The polypeptide is Histone H1B, sperm (Platynereis dumerilii (Dumeril's clam worm)).